The sequence spans 358 residues: Sulfate/thiosulfate import ATP-binding protein CysA (358 aa).

The region spanning 3 to 237 (IKIENLEKHF…PQTPFVTQFV (235 aa)) is the ABC transporter domain. 35–42 (GPSGCGKT) is an ATP binding site.

The protein belongs to the ABC transporter superfamily. Sulfate/tungstate importer (TC 3.A.1.6) family. In terms of assembly, the complex is composed of two ATP-binding proteins (CysA), two transmembrane proteins (CysT and CysW) and a solute-binding protein (CysP).

The protein localises to the cell inner membrane. The catalysed reaction is sulfate(out) + ATP + H2O = sulfate(in) + ADP + phosphate + H(+). The enzyme catalyses thiosulfate(out) + ATP + H2O = thiosulfate(in) + ADP + phosphate + H(+). Functionally, part of the ABC transporter complex CysAWTP involved in sulfate/thiosulfate import. Responsible for energy coupling to the transport system. This chain is Sulfate/thiosulfate import ATP-binding protein CysA, found in Mannheimia succiniciproducens (strain KCTC 0769BP / MBEL55E).